A 285-amino-acid chain; its full sequence is Retron Ec67 DNA adenine methylase (285 aa).

Positions 7, 11, 51, and 179 each coordinate S-adenosyl-L-methionine.

This sequence belongs to the N(4)/N(6)-methyltransferase family.

The catalysed reaction is a 2'-deoxyadenosine in DNA + S-adenosyl-L-methionine = an N(6)-methyl-2'-deoxyadenosine in DNA + S-adenosyl-L-homocysteine + H(+). An alpha subtype methylase that recognizes the double-stranded sequence 5'-GATC-3' and methylates A-2 on both strands. May play a regulatory role in the functions of the retron. In Escherichia coli, this protein is Retron Ec67 DNA adenine methylase.